The following is a 427-amino-acid chain: Serine--tRNA ligase (427 aa).

231-233 (TAE) contributes to the L-serine binding site. 262–264 (RSE) is a binding site for ATP. Glutamate 285 contacts L-serine. 349-352 (EISS) provides a ligand contact to ATP. Serine 385 contributes to the L-serine binding site.

This sequence belongs to the class-II aminoacyl-tRNA synthetase family. Type-1 seryl-tRNA synthetase subfamily. As to quaternary structure, homodimer. The tRNA molecule binds across the dimer.

The protein localises to the cytoplasm. The enzyme catalyses tRNA(Ser) + L-serine + ATP = L-seryl-tRNA(Ser) + AMP + diphosphate + H(+). It catalyses the reaction tRNA(Sec) + L-serine + ATP = L-seryl-tRNA(Sec) + AMP + diphosphate + H(+). The protein operates within aminoacyl-tRNA biosynthesis; selenocysteinyl-tRNA(Sec) biosynthesis; L-seryl-tRNA(Sec) from L-serine and tRNA(Sec): step 1/1. In terms of biological role, catalyzes the attachment of serine to tRNA(Ser). Is also able to aminoacylate tRNA(Sec) with serine, to form the misacylated tRNA L-seryl-tRNA(Sec), which will be further converted into selenocysteinyl-tRNA(Sec). The sequence is that of Serine--tRNA ligase from Staphylococcus saprophyticus subsp. saprophyticus (strain ATCC 15305 / DSM 20229 / NCIMB 8711 / NCTC 7292 / S-41).